Here is a 183-residue protein sequence, read N- to C-terminus: Bifunctional protein PyrR (183 aa).

Positions 102–114 (VVLVDDVLFSGRT) match the PRPP-binding motif.

This sequence belongs to the purine/pyrimidine phosphoribosyltransferase family. PyrR subfamily.

It carries out the reaction UMP + diphosphate = 5-phospho-alpha-D-ribose 1-diphosphate + uracil. Functionally, regulates the transcription of the pyrimidine nucleotide (pyr) operon in response to exogenous pyrimidines. Also displays a weak uracil phosphoribosyltransferase activity which is not physiologically significant. The polypeptide is Bifunctional protein PyrR (Leifsonia xyli subsp. xyli (strain CTCB07)).